A 516-amino-acid chain; its full sequence is MKVVITVVTCLFLLSVMQLSFFNIFNYQLLDATTNGSKDSRKSKDKLLGGLLTADFDEDSCLSRYESSLYRKPSPYKPSRYLVSKLRSYEMLHKRCGPGTEAYKKATEILGHDDENHSTKSVGECRYIVWIAVYGLGNRILTLASLFLYALLTDRIMLVDQRTDISDLFCEPFPGTSWLLPLDFPLTDQLDSFNKESPRCYGTMLKNHAINSTTTESIIPSYLCLYLIHDYDDYDKMFFCESDQILIRQVPWLVFNSNLYFIPSLWLIPSFQSELSKLFPQKETVFHHLARYLFHPTNQVWGMITRSYNGYLSRADERLGIQVRVFSKPAGYFQHVMDQILACTQREKLLPEVFVLETQVTNTSRSSKLKAVLVTSLYPEYSEILRQMYWKGPSSTGEIIQIYQPSQEIYQQTDNKLHDQKALAEIYLLSLTDYIVTSDSSTFGYVAQGLGGLKPWILYKPKNHTAPEPPCVRAVSMEPCFLRAPLYGCQAKKVNITPFVMYCEDRITGLKLVDSN.

A helical; Signal-anchor for type II membrane protein transmembrane segment spans residues isoleucine 5–phenylalanine 25. Topologically, residues asparagine 26–asparagine 516 are lumenal. N-linked (GlcNAc...) asparagine glycosylation is found at asparagine 35, asparagine 116, asparagine 211, asparagine 362, and asparagine 463.

The protein belongs to the glycosyltransferase 37 family. In terms of tissue distribution, expressed in leaves and stems.

Its subcellular location is the golgi apparatus. It is found in the golgi stack membrane. It functions in the pathway protein modification; protein glycosylation. Functionally, may be involved in cell wall biosynthesis. May act as a fucosyltransferase. In Arabidopsis thaliana (Mouse-ear cress), this protein is Probable fucosyltransferase 8 (FUT8).